A 202-amino-acid chain; its full sequence is Elongation factor Ts, chloroplastic (202 aa).

It belongs to the EF-Ts family.

Its subcellular location is the plastid. The protein localises to the chloroplast. Its function is as follows. Associates with the EF-Tu.GDP complex and induces the exchange of GDP to GTP. It remains bound to the aminoacyl-tRNA.EF-Tu.GTP complex up to the GTP hydrolysis stage on the ribosome. This is Elongation factor Ts, chloroplastic (tsf) from Phaeodactylum tricornutum (strain CCAP 1055/1).